The chain runs to 487 residues: Protein nucleotidyltransferase YdiU (487 aa).

Glycine 85, glycine 87, arginine 88, lysine 108, aspartate 120, glycine 121, arginine 171, and arginine 178 together coordinate ATP. The active-site Proton acceptor is aspartate 247. Mg(2+) is bound by residues asparagine 248 and aspartate 257. Aspartate 257 contributes to the ATP binding site.

It belongs to the SELO family. Requires Mg(2+) as cofactor. Mn(2+) serves as cofactor.

The catalysed reaction is L-seryl-[protein] + ATP = 3-O-(5'-adenylyl)-L-seryl-[protein] + diphosphate. It catalyses the reaction L-threonyl-[protein] + ATP = 3-O-(5'-adenylyl)-L-threonyl-[protein] + diphosphate. It carries out the reaction L-tyrosyl-[protein] + ATP = O-(5'-adenylyl)-L-tyrosyl-[protein] + diphosphate. The enzyme catalyses L-histidyl-[protein] + UTP = N(tele)-(5'-uridylyl)-L-histidyl-[protein] + diphosphate. The catalysed reaction is L-seryl-[protein] + UTP = O-(5'-uridylyl)-L-seryl-[protein] + diphosphate. It catalyses the reaction L-tyrosyl-[protein] + UTP = O-(5'-uridylyl)-L-tyrosyl-[protein] + diphosphate. Nucleotidyltransferase involved in the post-translational modification of proteins. It can catalyze the addition of adenosine monophosphate (AMP) or uridine monophosphate (UMP) to a protein, resulting in modifications known as AMPylation and UMPylation. In Agrobacterium fabrum (strain C58 / ATCC 33970) (Agrobacterium tumefaciens (strain C58)), this protein is Protein nucleotidyltransferase YdiU.